A 463-amino-acid chain; its full sequence is Asparagine--tRNA ligase (463 aa).

The protein belongs to the class-II aminoacyl-tRNA synthetase family. In terms of assembly, homodimer.

The protein localises to the cytoplasm. The catalysed reaction is tRNA(Asn) + L-asparagine + ATP = L-asparaginyl-tRNA(Asn) + AMP + diphosphate + H(+). This is Asparagine--tRNA ligase from Acholeplasma laidlawii (strain PG-8A).